We begin with the raw amino-acid sequence, 445 residues long: Beclin-1 (445 aa).

The BH3 motif lies at 103–122 (TMENLSRRLKVTGDLFDIMS). Residues 137–264 (DTLLDQLDTQ…QLDKLKKTNV (128 aa)) adopt a coiled-coil conformation. Residues 240–445 (DDLKSVENQM…AWVSSQFYNK (206 aa)) are evolutionary conserved domain (ECD). Positions 420-445 (WTKALKFMLTNLKWGLAWVSSQFYNK) are required for membrane-association.

The protein belongs to the beclin family. Component of the PI3K (PI3KC3/PI3K-III/class III phosphatidylinositol 3-kinase) complex. Post-translationally, may be proteolytically processed by caspases; the C-terminal fragment(s) may induce apoptosis.

It localises to the cytoplasm. The protein resides in the golgi apparatus. Its subcellular location is the trans-Golgi network membrane. It is found in the endosome membrane. The protein localises to the endoplasmic reticulum membrane. It localises to the mitochondrion membrane. The protein resides in the cytoplasmic vesicle. Its subcellular location is the autophagosome. In terms of biological role, plays a central role in autophagy. Acts as core subunit of different PI3K complex forms that mediate formation of phosphatidylinositol 3-phosphate and are believed to play a role in multiple membrane trafficking pathways: PI3KC3-C1 is involved in initiation of autophagosomes and PI3KC3-C2 in maturation of autophagosomes and endocytosis. Involved in regulation of degradative endocytic trafficking and required for the abscission step in cytokinesis, probably in the context of PI3KC3-C2. Essential for the formation of PI3KC3-C2 but not PI3KC3-C1 PI3K complex forms. Involved in endocytosis including endosome formation in neuronal cells. The chain is Beclin-1 (becn1) from Xenopus tropicalis (Western clawed frog).